Consider the following 101-residue polypeptide: Venom protein 214 (101 aa).

The first 16 residues, 1-16 (MIRYVLVIITCFLVAA), serve as a signal peptide directing secretion.

In terms of processing, contains 3 disulfide bonds. As to expression, expressed by the venom gland.

The protein resides in the secreted. This Lychas mucronatus (Chinese swimming scorpion) protein is Venom protein 214.